The following is a 190-amino-acid chain: Female-specific histamine-binding protein 1 (190 aa).

The signal sequence occupies residues 1 to 18; that stretch reads MKLLLSLAFVLALSQVKA. Tyr54, Asp57, Trp60, Glu100, Tyr118, Glu153, and Trp155 together coordinate histamine. Disulfide bonds link Cys66–Cys187 and Cys137–Cys166.

This sequence belongs to the calycin superfamily. Histamine-binding salivary protein family. In terms of assembly, monomer. Expressed in salivary glands.

It is found in the secreted. Salivary tick protein that acts by scavenging histamine at the wound site, outcompeting histamine receptors for histamine, thereby overcoming host inflammatory responses. Binds histamine with a high-affinity (Kd=18 nM). Contains two binding histamine sites (H and L), that appear to bind histamine with differing affinities (high and low). In vivo, when tested on a mouse asthma model, shows a profound inhibitory effect on allergic asthma. Aerosol administration of this protein prevents airway hyperreactivity and abrogates peribronchial inflammation, eosinophil recruitment, mucus hypersecretion, and interleukins (IL-4 and IL-5) secretion. In addition, when tested on a mouse model of acute respiratory distress syndrome (ARDS), it attenuates endotoxin-induced acute lung injury. The polypeptide is Female-specific histamine-binding protein 1 (Rhipicephalus appendiculatus (Brown ear tick)).